The sequence spans 101 residues: Small ribosomal subunit protein bS18c (101 aa).

Over residues 1 to 19 the composition is skewed to basic residues; sequence MDKSKQPFRKSKRSFRRRL. Positions 1 to 26 are disordered; sequence MDKSKQPFRKSKRSFRRRLPPIGSGD.

It belongs to the bacterial ribosomal protein bS18 family. Part of the 30S ribosomal subunit.

The protein resides in the plastid. The protein localises to the chloroplast. This chain is Small ribosomal subunit protein bS18c, found in Phalaenopsis aphrodite subsp. formosana (Moth orchid).